The chain runs to 356 residues: MASNNNICAYELIEAEAQSWDYILSYLRPSCIKCAIQLGIPDILHKNADPIMSLSDLIAALPNLNPSKTTFIPILMRVLVDFGLFNYHQQQGDGYSLTTVGRLLVENHHFGNRSFFLFAQHPVVLNTAASVGDWLKDDLRTAFETADGKSHWDYCGADPEFNGVFNDAMAGDSRLMSNLLISDCCAGVFEGLTSLVDIGGGTGAVAMAIAGAFPSLKCIVLDLPHVIADRKGSGNLEFVAGSMFDKIPHANAILLKWILHNWDDEDCVKLLKKCKESISSRENGGKVIIIDMIMEDNYNNKQLVQSQHLMDLIMRITYASKERTEKEWEKLFLEAGFSGYKIITSLGLRSLIEIYP.

S-adenosyl-L-methionine is bound at residue aspartate 222. Residue histidine 260 is the Proton acceptor of the active site.

Belongs to the class I-like SAM-binding methyltransferase superfamily. Cation-independent O-methyltransferase family. Homodimer.

The catalysed reaction is quercetin + S-adenosyl-L-methionine = rhamnetin + S-adenosyl-L-homocysteine + H(+). It carries out the reaction kaempferol + S-adenosyl-L-methionine = kaempferide + S-adenosyl-L-homocysteine + H(+). The enzyme catalyses myricetin + S-adenosyl-L-methionine = 7-O-methylmyricetin + S-adenosyl-L-homocysteine + H(+). It catalyses the reaction kaempferide + S-adenosyl-L-methionine = 7,4'-O-dimethylkaempferol + S-adenosyl-L-homocysteine + H(+). The catalysed reaction is isorhamnetin + S-adenosyl-L-methionine = 3',4'-O-dimethylquercetin + S-adenosyl-L-homocysteine + 2 H(+). It carries out the reaction 3',4',5,7-tetrahydroxy-3-methoxyflavone + S-adenosyl-L-methionine = 3',4',5-trihydroxy-3,7-dimethoxyflavone + S-adenosyl-L-homocysteine + H(+). The enzyme catalyses rhamnetin + S-adenosyl-L-methionine = 7,4'-O-dimethylquercetin + S-adenosyl-L-homocysteine + H(+). It catalyses the reaction syringetin + S-adenosyl-L-methionine = 7,3',5'-O-trimethylmyricetin + S-adenosyl-L-homocysteine + H(+). The catalysed reaction is 3',4',5'-O-trimethylmyricetin + S-adenosyl-L-methionine = 7,3',4',5'-O-tetramethylmyricetin + S-adenosyl-L-homocysteine. The protein operates within flavonoid metabolism. In terms of biological role, flavonoid 7/4'-O-methyltransferase involved in the biosynthesis of polymethoxylated flavonoids natural products such as myricetin derivatives, aroma compounds possessing antioxidant properties and exhibiting pharmacological activities such as anti-carcinogen, anti-viral, anti-thrombotic, anti-diabetic, anti-atherosclerotic, and anti-inflammatory effects. Catalyzes S-adenosylmethionine-dependent regioselective 7/4'-O-methylation of flavonoids; active on various hydroxylated flavonoid substrates. The polypeptide is Myricetin 7/4'-O-methyltransferase 2 (Solanum lycopersicum (Tomato)).